Consider the following 679-residue polypeptide: Methionine--tRNA ligase (679 aa).

Positions 15–25 match the 'HIGH' region motif; sequence PYANGPVHIGH. C147, C150, C160, and C163 together coordinate Zn(2+). A 'KMSKS' region motif is present at residues 332-336; sequence KISTS. Residue T335 coordinates ATP. Residues 578–679 enclose the tRNA-binding domain; it reads DFMKLDIRVG…REVKPGSEVK (102 aa).

This sequence belongs to the class-I aminoacyl-tRNA synthetase family. MetG type 1 subfamily. In terms of assembly, homodimer. The cofactor is Zn(2+).

The protein localises to the cytoplasm. The catalysed reaction is tRNA(Met) + L-methionine + ATP = L-methionyl-tRNA(Met) + AMP + diphosphate. Functionally, is required not only for elongation of protein synthesis but also for the initiation of all mRNA translation through initiator tRNA(fMet) aminoacylation. The chain is Methionine--tRNA ligase from Bacteroides fragilis (strain ATCC 25285 / DSM 2151 / CCUG 4856 / JCM 11019 / LMG 10263 / NCTC 9343 / Onslow / VPI 2553 / EN-2).